The primary structure comprises 337 residues: Adenosine deaminase (337 aa).

His15 and His17 together coordinate Zn(2+). Residues His17, Asp19, and Gly172 each contribute to the substrate site. His199 provides a ligand contact to Zn(2+). Glu202 acts as the Proton donor in catalysis. Zn(2+) is bound at residue Asp279.

The protein belongs to the metallo-dependent hydrolases superfamily. Adenosine and AMP deaminases family. Adenosine deaminase subfamily. It depends on Zn(2+) as a cofactor.

It catalyses the reaction adenosine + H2O + H(+) = inosine + NH4(+). The enzyme catalyses 2'-deoxyadenosine + H2O + H(+) = 2'-deoxyinosine + NH4(+). Catalyzes the hydrolytic deamination of adenosine and 2-deoxyadenosine. The sequence is that of Adenosine deaminase from Enterococcus faecalis (strain ATCC 700802 / V583).